Reading from the N-terminus, the 165-residue chain is Endoribonuclease YbeY (165 aa).

Zn(2+)-binding residues include histidine 126, histidine 130, and histidine 136.

This sequence belongs to the endoribonuclease YbeY family. It depends on Zn(2+) as a cofactor.

It is found in the cytoplasm. In terms of biological role, single strand-specific metallo-endoribonuclease involved in late-stage 70S ribosome quality control and in maturation of the 3' terminus of the 16S rRNA. The chain is Endoribonuclease YbeY from Ruegeria pomeroyi (strain ATCC 700808 / DSM 15171 / DSS-3) (Silicibacter pomeroyi).